Consider the following 190-residue polypeptide: Peptidyl-tRNA hydrolase (190 aa).

Y14 lines the tRNA pocket. H19 acts as the Proton acceptor in catalysis. TRNA contacts are provided by Y64, N66, and N113.

This sequence belongs to the PTH family. Monomer.

The protein resides in the cytoplasm. The enzyme catalyses an N-acyl-L-alpha-aminoacyl-tRNA + H2O = an N-acyl-L-amino acid + a tRNA + H(+). In terms of biological role, hydrolyzes ribosome-free peptidyl-tRNAs (with 1 or more amino acids incorporated), which drop off the ribosome during protein synthesis, or as a result of ribosome stalling. Its function is as follows. Catalyzes the release of premature peptidyl moieties from peptidyl-tRNA molecules trapped in stalled 50S ribosomal subunits, and thus maintains levels of free tRNAs and 50S ribosomes. In Gemmatimonas aurantiaca (strain DSM 14586 / JCM 11422 / NBRC 100505 / T-27), this protein is Peptidyl-tRNA hydrolase.